A 341-amino-acid polypeptide reads, in one-letter code: Methionine import ATP-binding protein MetN (341 aa).

Positions 2–241 constitute an ABC transporter domain; that stretch reads IELNQIVKRY…PQHDVTKRFV (240 aa). 38-45 is an ATP binding site; the sequence is GFSGAGKS.

Belongs to the ABC transporter superfamily. Methionine importer (TC 3.A.1.24) family. As to quaternary structure, the complex is composed of two ATP-binding proteins (MetN), two transmembrane proteins (MetI) and a solute-binding protein (MetQ).

The protein resides in the cell membrane. The enzyme catalyses L-methionine(out) + ATP + H2O = L-methionine(in) + ADP + phosphate + H(+). The catalysed reaction is D-methionine(out) + ATP + H2O = D-methionine(in) + ADP + phosphate + H(+). Its function is as follows. Part of the ABC transporter complex MetNIQ involved in methionine import. Responsible for energy coupling to the transport system. This chain is Methionine import ATP-binding protein MetN, found in Staphylococcus saprophyticus subsp. saprophyticus (strain ATCC 15305 / DSM 20229 / NCIMB 8711 / NCTC 7292 / S-41).